A 299-amino-acid polypeptide reads, in one-letter code: 4-hydroxy-3-methylbut-2-enyl diphosphate reductase (299 aa).

Residue C12 coordinates [4Fe-4S] cluster. Residues H42 and H88 each contribute to the (2E)-4-hydroxy-3-methylbut-2-enyl diphosphate site. The dimethylallyl diphosphate site is built by H42 and H88. The isopentenyl diphosphate site is built by H42 and H88. C110 is a [4Fe-4S] cluster binding site. H138 provides a ligand contact to (2E)-4-hydroxy-3-methylbut-2-enyl diphosphate. Dimethylallyl diphosphate is bound at residue H138. Isopentenyl diphosphate is bound at residue H138. The active-site Proton donor is E140. T177 is a binding site for (2E)-4-hydroxy-3-methylbut-2-enyl diphosphate. C205 contacts [4Fe-4S] cluster. Residues S233, N235, and S277 each coordinate (2E)-4-hydroxy-3-methylbut-2-enyl diphosphate. Dimethylallyl diphosphate is bound by residues S233, N235, and S277. The isopentenyl diphosphate site is built by S233, N235, and S277.

This sequence belongs to the IspH family. The cofactor is [4Fe-4S] cluster.

The enzyme catalyses isopentenyl diphosphate + 2 oxidized [2Fe-2S]-[ferredoxin] + H2O = (2E)-4-hydroxy-3-methylbut-2-enyl diphosphate + 2 reduced [2Fe-2S]-[ferredoxin] + 2 H(+). It carries out the reaction dimethylallyl diphosphate + 2 oxidized [2Fe-2S]-[ferredoxin] + H2O = (2E)-4-hydroxy-3-methylbut-2-enyl diphosphate + 2 reduced [2Fe-2S]-[ferredoxin] + 2 H(+). It functions in the pathway isoprenoid biosynthesis; dimethylallyl diphosphate biosynthesis; dimethylallyl diphosphate from (2E)-4-hydroxy-3-methylbutenyl diphosphate: step 1/1. The protein operates within isoprenoid biosynthesis; isopentenyl diphosphate biosynthesis via DXP pathway; isopentenyl diphosphate from 1-deoxy-D-xylulose 5-phosphate: step 6/6. Functionally, catalyzes the conversion of 1-hydroxy-2-methyl-2-(E)-butenyl 4-diphosphate (HMBPP) into a mixture of isopentenyl diphosphate (IPP) and dimethylallyl diphosphate (DMAPP). Acts in the terminal step of the DOXP/MEP pathway for isoprenoid precursor biosynthesis. The chain is 4-hydroxy-3-methylbut-2-enyl diphosphate reductase from Malacoplasma penetrans (strain HF-2) (Mycoplasma penetrans).